We begin with the raw amino-acid sequence, 490 residues long: MSRMAEQQLYIHGGYTSATSGRTFETINPANGNVLATVQAAGREDVDRAVKSAQQGQKIWASMTAMERSRILRRAVDILRERNDELAKLETLDTGKAYSETSTVDIVTGADVLEYYAGLIPALEGSQIPLRETSFVYTRREPLGVVAGIGAWNYPIQIALWKSAPALAAGNAMIFKPSEVTPLTALKLAEIYSEAGLPNGVFNVLPGVGAETGQYLTEHPGIAKVSFTGGVASGKKVMANSAASSLKEVTMELGGKSPLIVFDDADLDLAADIAMMANFFSSGQVCTNGTRVFVPAKCKAAFEQKILARVERIRAGDVFDPQTNFGPLVSFPHRDNVLRYIAKGKEEGARVLCGGDVLKGDGFDNGAWVAPTVFTDCSDDMTIVREEIFGPVMSILTYESEDEVIRRANDTDYGLAAGIVTADLNRAHRVIHQLEAGICWINTWGESPAEMPVGGYKHSGIGRENGMMTLQSYTQVKSIQVEMAKFQSIF.

Positions 26, 27, and 93 each coordinate K(+). Residue 150-152 (GAW) participates in NAD(+) binding. Residue K162 is the Charge relay system of the active site. Residue 176 to 179 (KPSE) coordinates NAD(+). A K(+)-binding site is contributed by V180. 230–233 (GVAS) is an NAD(+) binding site. Residue L246 participates in K(+) binding. E252 functions as the Proton acceptor in the catalytic mechanism. Residues G254, C286, and E387 each coordinate NAD(+). Residue C286 is the Nucleophile of the active site. Position 286 is a cysteine sulfenic acid (-SOH) (C286). K(+) contacts are provided by K457 and G460. Residue E464 is the Charge relay system of the active site.

This sequence belongs to the aldehyde dehydrogenase family. Dimer of dimers. K(+) is required as a cofactor.

The catalysed reaction is betaine aldehyde + NAD(+) + H2O = glycine betaine + NADH + 2 H(+). Its pathway is amine and polyamine biosynthesis; betaine biosynthesis via choline pathway; betaine from betaine aldehyde: step 1/1. Functionally, involved in the biosynthesis of the osmoprotectant glycine betaine. Catalyzes the irreversible oxidation of betaine aldehyde to the corresponding acid. The protein is Betaine aldehyde dehydrogenase of Escherichia coli (strain ATCC 8739 / DSM 1576 / NBRC 3972 / NCIMB 8545 / WDCM 00012 / Crooks).